The following is a 740-amino-acid chain: Zinc finger CCCH domain-containing protein 14 (740 aa).

4 disordered regions span residues 82–240 (SNKQ…NIKG), 254–314 (VSAG…DDAV), 390–426 (ITPS…DDEE), and 444–469 (SFRD…HHST). 2 stretches are compositionally biased toward basic and acidic residues: residues 87–158 (ETSK…EIQR) and 176–185 (EHVRARGEKH). Positions 186–200 (DRHHHKDHRRGRSHE) are enriched in basic residues. Residues 204–214 (ITSTIVRQASA) are compositionally biased toward polar residues. A compositionally biased stretch (polar residues) spans 393-409 (SRDSTPTDDSPTMQKWN). The segment covering 414-426 (IGDDSEESEDDEE) has biased composition (acidic residues). C3H1-type zinc fingers lie at residues 499–522 (HVKE…MHPT) and 523–543 (TNCK…IHPP). Positions 623–661 (IKKKPAPGAESEKKEEKSDENESKAEEPKAEVAPVQPKP) are disordered. Residues 632 to 652 (ESEKKEEKSDENESKAEEPKA) show a composition bias toward basic and acidic residues. 3 C3H1-type zinc fingers span residues 668–691 (LHSM…KHPK), 674–691 (CRYA…KHPK), and 693–709 (CRFG…FYHK).

This sequence belongs to the ZC3H14 family.

The protein resides in the nucleus. It is found in the cytoplasm. RNA-binding protein involved in the biogenesis of circular RNAs (circRNAs), which are produced by back-splicing circularization of pre-mRNAs. The sequence is that of Zinc finger CCCH domain-containing protein 14 (sut-2) from Caenorhabditis elegans.